Here is a 345-residue protein sequence, read N- to C-terminus: Biotin synthase (345 aa).

One can recognise a Radical SAM core domain in the interval 66-291 (PEVEIEGIIS…RTILRFAGGR (226 aa)). Residues Cys-81, Cys-85, and Cys-88 each contribute to the [4Fe-4S] cluster site. [2Fe-2S] cluster contacts are provided by Cys-124, Cys-157, Cys-216, and Arg-286.

Belongs to the radical SAM superfamily. Biotin synthase family. In terms of assembly, homodimer. The cofactor is [4Fe-4S] cluster. It depends on [2Fe-2S] cluster as a cofactor.

The catalysed reaction is (4R,5S)-dethiobiotin + (sulfur carrier)-SH + 2 reduced [2Fe-2S]-[ferredoxin] + 2 S-adenosyl-L-methionine = (sulfur carrier)-H + biotin + 2 5'-deoxyadenosine + 2 L-methionine + 2 oxidized [2Fe-2S]-[ferredoxin]. It participates in cofactor biosynthesis; biotin biosynthesis; biotin from 7,8-diaminononanoate: step 2/2. Catalyzes the conversion of dethiobiotin (DTB) to biotin by the insertion of a sulfur atom into dethiobiotin via a radical-based mechanism. The chain is Biotin synthase from Mycobacterium leprae (strain Br4923).